The primary structure comprises 313 residues: Ribosomal RNA small subunit methyltransferase I (313 aa).

Positions 1-23 are disordered; sequence MASIQLARTTRGGDGVARADGTR.

It belongs to the methyltransferase superfamily. RsmI family.

The protein resides in the cytoplasm. It carries out the reaction cytidine(1402) in 16S rRNA + S-adenosyl-L-methionine = 2'-O-methylcytidine(1402) in 16S rRNA + S-adenosyl-L-homocysteine + H(+). Catalyzes the 2'-O-methylation of the ribose of cytidine 1402 (C1402) in 16S rRNA. This chain is Ribosomal RNA small subunit methyltransferase I, found in Micromonospora olivasterospora.